A 391-amino-acid chain; its full sequence is 8-amino-7-oxononanoate synthase (391 aa).

R19 is a binding site for substrate. G106–Y107 is a pyridoxal 5'-phosphate binding site. Substrate is bound at residue H131. Pyridoxal 5'-phosphate is bound by residues S178, H206, and T234. The residue at position 237 (K237) is an N6-(pyridoxal phosphate)lysine. T353 serves as a coordination point for substrate.

The protein belongs to the class-II pyridoxal-phosphate-dependent aminotransferase family. BioF subfamily. As to quaternary structure, homodimer. The cofactor is pyridoxal 5'-phosphate.

The enzyme catalyses 6-carboxyhexanoyl-[ACP] + L-alanine + H(+) = (8S)-8-amino-7-oxononanoate + holo-[ACP] + CO2. It functions in the pathway cofactor biosynthesis; biotin biosynthesis. Catalyzes the decarboxylative condensation of pimeloyl-[acyl-carrier protein] and L-alanine to produce 8-amino-7-oxononanoate (AON), [acyl-carrier protein], and carbon dioxide. The polypeptide is 8-amino-7-oxononanoate synthase (Geobacter sulfurreducens (strain ATCC 51573 / DSM 12127 / PCA)).